An 816-amino-acid chain; its full sequence is Sucrose synthase 2 (816 aa).

The interval 280 to 757 is GT-B glycosyltransferase; it reads MVLNVVILSP…GLQRIEEKYT (478 aa).

This sequence belongs to the glycosyltransferase 1 family. Plant sucrose synthase subfamily. Forms homotetramers and heterotetramers with SS1, all three possible heterotetramers are formed. In terms of tissue distribution, abundant in developing endosperm, low in aleurone, and undetected in coleoptiles and roots. Also detected in crude extracts of anthers and in immature embryos.

The enzyme catalyses an NDP-alpha-D-glucose + D-fructose = a ribonucleoside 5'-diphosphate + sucrose + H(+). Its function is as follows. Sucrose-cleaving enzyme that provides UDP-glucose and fructose for various metabolic pathways. The polypeptide is Sucrose synthase 2 (SS2) (Hordeum vulgare (Barley)).